The primary structure comprises 414 residues: Tryptophan synthase beta chain (414 aa).

N6-(pyridoxal phosphate)lysine is present on lysine 105.

This sequence belongs to the TrpB family. As to quaternary structure, tetramer of two alpha and two beta chains. Pyridoxal 5'-phosphate is required as a cofactor.

The enzyme catalyses (1S,2R)-1-C-(indol-3-yl)glycerol 3-phosphate + L-serine = D-glyceraldehyde 3-phosphate + L-tryptophan + H2O. The protein operates within amino-acid biosynthesis; L-tryptophan biosynthesis; L-tryptophan from chorismate: step 5/5. Functionally, the beta subunit is responsible for the synthesis of L-tryptophan from indole and L-serine. The chain is Tryptophan synthase beta chain from Gloeobacter violaceus (strain ATCC 29082 / PCC 7421).